The sequence spans 453 residues: Bifunctional protein GlmU (453 aa).

The tract at residues Met1–Arg231 is pyrophosphorylase. UDP-N-acetyl-alpha-D-glucosamine contacts are provided by residues Leu10–Gly13, Lys24, Gln77, Gly82–Thr83, Tyr105–Asp107, Gly143, Glu157, Asn172, and Asn229. Asp107 contributes to the Mg(2+) binding site. Asn229 contributes to the Mg(2+) binding site. The linker stretch occupies residues Ala232–Ser252. Residues Gly253–His453 are N-acetyltransferase. UDP-N-acetyl-alpha-D-glucosamine contacts are provided by Arg318 and Lys336. His348 serves as the catalytic Proton acceptor. 2 residues coordinate UDP-N-acetyl-alpha-D-glucosamine: Tyr351 and Asn362. Residues Ala365, Asn371 to Tyr372, Ser390, Ser408, and Arg425 each bind acetyl-CoA.

It in the N-terminal section; belongs to the N-acetylglucosamine-1-phosphate uridyltransferase family. This sequence in the C-terminal section; belongs to the transferase hexapeptide repeat family. Homotrimer. Mg(2+) is required as a cofactor.

The protein localises to the cytoplasm. The catalysed reaction is alpha-D-glucosamine 1-phosphate + acetyl-CoA = N-acetyl-alpha-D-glucosamine 1-phosphate + CoA + H(+). It carries out the reaction N-acetyl-alpha-D-glucosamine 1-phosphate + UTP + H(+) = UDP-N-acetyl-alpha-D-glucosamine + diphosphate. The protein operates within nucleotide-sugar biosynthesis; UDP-N-acetyl-alpha-D-glucosamine biosynthesis; N-acetyl-alpha-D-glucosamine 1-phosphate from alpha-D-glucosamine 6-phosphate (route II): step 2/2. It participates in nucleotide-sugar biosynthesis; UDP-N-acetyl-alpha-D-glucosamine biosynthesis; UDP-N-acetyl-alpha-D-glucosamine from N-acetyl-alpha-D-glucosamine 1-phosphate: step 1/1. Its pathway is bacterial outer membrane biogenesis; LPS lipid A biosynthesis. Catalyzes the last two sequential reactions in the de novo biosynthetic pathway for UDP-N-acetylglucosamine (UDP-GlcNAc). The C-terminal domain catalyzes the transfer of acetyl group from acetyl coenzyme A to glucosamine-1-phosphate (GlcN-1-P) to produce N-acetylglucosamine-1-phosphate (GlcNAc-1-P), which is converted into UDP-GlcNAc by the transfer of uridine 5-monophosphate (from uridine 5-triphosphate), a reaction catalyzed by the N-terminal domain. In Rhizobium rhizogenes (strain K84 / ATCC BAA-868) (Agrobacterium radiobacter), this protein is Bifunctional protein GlmU.